A 436-amino-acid polypeptide reads, in one-letter code: Tryptophan synthase beta chain (436 aa).

Lysine 129 is subject to N6-(pyridoxal phosphate)lysine.

The protein belongs to the TrpB family. Tetramer of two alpha and two beta chains. The cofactor is pyridoxal 5'-phosphate.

The enzyme catalyses (1S,2R)-1-C-(indol-3-yl)glycerol 3-phosphate + L-serine = D-glyceraldehyde 3-phosphate + L-tryptophan + H2O. Its pathway is amino-acid biosynthesis; L-tryptophan biosynthesis; L-tryptophan from chorismate: step 5/5. Its function is as follows. The beta subunit is responsible for the synthesis of L-tryptophan from indole and L-serine. The protein is Tryptophan synthase beta chain of Prochlorococcus marinus (strain MIT 9313).